The following is a 219-amino-acid chain: GPI ethanolamine phosphate transferase, stabilizing subunit (219 aa).

6 consecutive transmembrane segments (helical) span residues 11 to 31 (YTNL…SFFV), 42 to 62 (TWLC…YLVV), 86 to 106 (CFLM…APLI), 113 to 133 (FLFA…LLGP), 155 to 175 (LQIT…PIPL), and 189 to 209 (TLGA…WIYW).

The protein belongs to the PIGF family. Part of the ethanolamine phosphate transferase 3 complex composed by PIGO and PIGF. Part of the ethanolamine phosphate transferase 2 complex with PIGG. PIGF is required to stabilize PIGG and PIGO.

It localises to the endoplasmic reticulum membrane. It functions in the pathway glycolipid biosynthesis; glycosylphosphatidylinositol-anchor biosynthesis. Stabilizing subunit of the ethanolamine phosphate transferase 3 and ethanolamine phosphate transferase 2 complexes that sequentially transfer an ethanolamine phosphate (EtNP) from a phosphatidylethanolamine (PE) to the 6-OH position of the third alpha-1,2-linked mannose and the second alpha-1,6-linked mannose of the alpha-D-Man-(1-&gt;2)-alpha-D-Man-(1-&gt;6)-2-PEtn-alpha-D-Man-(1-&gt;4)-alpha-D-GlcN-(1-&gt;6)-(1-radyl,2-acyl-sn-glycero-3-phospho)-2-acyl-inositol (also termed H6) intermediate to generate a 6-PEtn-alpha-D-Man-(1-&gt;2)-6-PEtn-alpha-D-Man-(1-&gt;6)-2-PEtn-alpha-D-Man-(1-&gt;4)-alpha-D-GlcN-(1-&gt;6)-(1-radyl,2-acyl-sn-glycero-3-phospho)-2-acyl-inositol (also termed H8). Participates in the tenth and eleventh steps of the glycosylphosphatidylinositol-anchor biosynthesis, in association with PIGO and PIGG, respectively. This Mus musculus (Mouse) protein is GPI ethanolamine phosphate transferase, stabilizing subunit.